We begin with the raw amino-acid sequence, 489 residues long: Topoisomerase I damage affected protein 11 (489 aa).

5 disordered regions span residues 1–199, 263–321, 344–370, 391–413, and 439–477; these read MDQK…QSMA, INVS…DDNK, ERTLNWDEPPTPVEETEENQEGDKSVS, EDGHHTQQSNSNVNRPKNTHGQV, and DDNSDTHLKQRSGRTAVRKTKSGNKLNFVDDSDDGDSTL. Polar residues predominate over residues 19 to 35; that stretch reads DTSSRYTTGSISPQFAS. Positions 73–89 are enriched in basic and acidic residues; that stretch reads EESHNHPLKEDKSESRQ. Polar residues-rich tracts occupy residues 90–103, 128–147, and 156–167; these read RQVSVSNSNPSSKG, PQSQSNVASGNSANKNNLHP, and NATTQTPSSMSM. Residues 182–197 are compositionally biased toward low complexity; it reads SSKRNSMHSRTSSSQS. A coiled-coil region spans residues 210-266; sequence VNALLQSLANKELELLECKRKIDDLKKQLHMEENIYQNKANELQELKNKVSKNINVS. Polar residues predominate over residues 263–281; it reads INVSGSNQPVFNKTSTTGR. Residues 396–411 are compositionally biased toward polar residues; it reads TQQSNSNVNRPKNTHG. The segment covering 447–460 has biased composition (basic residues); the sequence is KQRSGRTAVRKTKS. The span at 468 to 477 shows a compositional bias: acidic residues; sequence DDSDDGDSTL.

It belongs to the TDA11 family.

It is found in the cytoplasm. This is Topoisomerase I damage affected protein 11 (TDA11) from Candida glabrata (strain ATCC 2001 / BCRC 20586 / JCM 3761 / NBRC 0622 / NRRL Y-65 / CBS 138) (Yeast).